Consider the following 402-residue polypeptide: Metacaspase-1 (402 aa).

Positions 1 to 79 (MAYPGQGGHH…FAPPSGPIGP (79 aa)) are disordered. Residues 23 to 45 (PAPHGYAQPGYGYAPPSGPPQGY) show a composition bias toward low complexity. Residues His193 and Cys249 contribute to the active site.

Belongs to the peptidase C14B family.

In terms of biological role, involved in cell death (apoptosis). The chain is Metacaspase-1 (MCA1) from Mycosarcoma maydis (Corn smut fungus).